A 1091-amino-acid polypeptide reads, in one-letter code: Ninein homolog (1091 aa).

A sufficient for binding to microtubules region spans residues 1-361; it reads MEVSADPYEQ…AVEVDERHAS (361 aa). 4 disordered regions span residues 100-216, 456-483, 525-602, and 616-639; these read YIES…TTSP, AQTS…KEEE, KAKK…EELT, and KAAK…SLEQ. 5 positions are modified to phosphoserine: Ser103, Ser107, Ser108, Ser113, and Ser141. Residue Thr144 is modified to Phosphothreonine. Residues 168-177 show a composition bias toward polar residues; it reads VQRSSSQSDL. Residues 487 to 526 are sufficient for interaction with ens; sequence LMEKLAALQMENAQLRDKTDELTIEIESLNVELIRSKTKA. Basic and acidic residues-rich tracts occupy residues 527-537 and 547-563; these read KKQEKQEKQED and RRGD…ESPR. Residue Ser594 is modified to Phosphoserine. Basic and acidic residues predominate over residues 616-634; it reads KAAKEGRSLTPESRSKELE. Phosphoserine occurs at positions 701 and 714. The interval 799-919 is disordered; sequence AKSLADSKDE…TSCLSHEKCS (121 aa). Over residues 822 to 845 the composition is skewed to polar residues; the sequence is SHKTASRNNLTTSETSIFSTTPFE. Low complexity predominate over residues 846–860; sequence SSQSGPSPTNSGNSN. Residues 894–913 show a composition bias toward polar residues; that stretch reads ETSSTASGKSFESNSKTSCL.

Interacts with ens.

The protein localises to the cytoplasm. It is found in the cytoskeleton. Its subcellular location is the microtubule organizing center. The protein resides in the centrosome. It localises to the perinuclear region. Required for the positioning and anchorage of the microtubule minus-ends in various cells. In fat body cells, part of perinuclear non-centrosomal microtubule-organizing centers (ncMTOCs) which function to accommodate the organization of microtubule (MT) networks to control nuclear positioning and dynein motor-based retrograde endosomal trafficking. Within the ncMTOCs, Msp300 and shot anchors the ncMTOC at the nuclear surface and recruits the MT minus-end regulators Patronin and Nin for assembly, anchoring and/or stabilization of circumferential and radial MTs at the ncMTOC. This protein may also function with Patronin to recruit msps to the ncMTOC for the gamma-tubulin-independent elongation of radial MTs. In embryonic myotubes and larval myofibers, functions with ens to regulate myonuclear positioning and, as a consequence, is involved in muscle development. Likely functions by positively regulating ens. Essential for embryogenesis, likely by contributing to accurate chromosome segregation during early embryonic nuclear divisions. However, other reports found that it is not essential for embryogenesis or embryonic cellular divisions. The sequence is that of Ninein homolog from Drosophila melanogaster (Fruit fly).